Here is a 164-residue protein sequence, read N- to C-terminus: Phosphopantetheine adenylyltransferase (164 aa).

Ser-9 serves as a coordination point for substrate. ATP is bound by residues 9–10 (SF) and His-17. Residues Lys-41, Val-78, and Arg-92 each contribute to the substrate site. Residues 93–95 (GLR), Glu-103, and 128–134 (SRPITAT) each bind ATP.

This sequence belongs to the bacterial CoaD family. As to quaternary structure, homohexamer. Requires Mg(2+) as cofactor.

It is found in the cytoplasm. The catalysed reaction is (R)-4'-phosphopantetheine + ATP + H(+) = 3'-dephospho-CoA + diphosphate. The protein operates within cofactor biosynthesis; coenzyme A biosynthesis; CoA from (R)-pantothenate: step 4/5. Its function is as follows. Reversibly transfers an adenylyl group from ATP to 4'-phosphopantetheine, yielding dephospho-CoA (dPCoA) and pyrophosphate. The polypeptide is Phosphopantetheine adenylyltransferase (Agrobacterium fabrum (strain C58 / ATCC 33970) (Agrobacterium tumefaciens (strain C58))).